Consider the following 179-residue polypeptide: Ribulose bisphosphate carboxylase small subunit, chloroplastic 5 (179 aa).

A chloroplast-targeting transit peptide spans 1 to 58 (MASSATMLSSVATAACAAPAQASMVAPFVGLKSASAFPVTQKTATGLSTLPSNGGRVQ).

It belongs to the RuBisCO small chain family. In terms of assembly, heterohexadecamer of 8 large and 8 small subunits.

Its subcellular location is the plastid. It localises to the chloroplast. RuBisCO catalyzes two reactions: the carboxylation of D-ribulose 1,5-bisphosphate, the primary event in carbon dioxide fixation, as well as the oxidative fragmentation of the pentose substrate. Both reactions occur simultaneously and in competition at the same active site. Although the small subunit is not catalytic it is essential for maximal activity. The sequence is that of Ribulose bisphosphate carboxylase small subunit, chloroplastic 5 from Fritillaria agrestis (Stinkbells).